A 183-amino-acid chain; its full sequence is Orotate phosphoribosyltransferase (183 aa).

5-phospho-alpha-D-ribose 1-diphosphate is bound by residues Arg-21, Lys-88, and 112 to 120; that span reads EDVVTTGES. Orotate-binding residues include Thr-116 and Arg-144.

The protein belongs to the purine/pyrimidine phosphoribosyltransferase family. PyrE subfamily. Homodimer. It depends on Mg(2+) as a cofactor.

The enzyme catalyses orotidine 5'-phosphate + diphosphate = orotate + 5-phospho-alpha-D-ribose 1-diphosphate. Its pathway is pyrimidine metabolism; UMP biosynthesis via de novo pathway; UMP from orotate: step 1/2. In terms of biological role, catalyzes the transfer of a ribosyl phosphate group from 5-phosphoribose 1-diphosphate to orotate, leading to the formation of orotidine monophosphate (OMP). This Thermus thermophilus (strain ATCC 27634 / DSM 579 / HB8) protein is Orotate phosphoribosyltransferase.